The following is a 446-amino-acid chain: Lysine histidine transporter 1 (446 aa).

Residues 1–37 (MVAQAPHDDHQDDEKLAAARQKEIEDWLPITSSRNAK) lie on the Cytoplasmic side of the membrane. A helical transmembrane segment spans residues 38–58 (WWYSAFHNVTAMVGAGVLGLP). The Extracellular segment spans residues 59–63 (YAMSQ). A helical membrane pass occupies residues 64–84 (LGWGPGIAVLVLSWVITLYTL). The Cytoplasmic segment spans residues 85–115 (WQMVEMHEMVPGKRFDRYHELGQHAFGEKLG). Residues 116-136 (LYIVVPQQLIVEIGVCIVYMV) form a helical membrane-spanning segment. At 137 to 157 (TGGKSLKKFHELVCDDCKPIK) the chain is on the extracellular side. The helical transmembrane segment at 158 to 178 (LTYFIMIFASVHFVLSHLPNF) threads the bilayer. Topologically, residues 179 to 180 (NS) are cytoplasmic. A helical membrane pass occupies residues 181 to 201 (ISGVSLAAAVMSLSYSTIAWA). Over 202-227 (SSASKGVQEDVQYGYKAKTTAGTVFN) the chain is Extracellular. Residues 228–248 (FFSGLGDVAFAYAGHNVVLEI) form a helical membrane-spanning segment. Topologically, residues 249–268 (QATIPSTPEKPSKGPMWRGV) are cytoplasmic. The chain crosses the membrane as a helical span at residues 269-289 (IVAYIVVALCYFPVALVGYYI). Residues 290-305 (FGNGVEDNILMSLKKP) are Extracellular-facing. A helical membrane pass occupies residues 306–326 (AWLIATANIFVVIHVIGSYQI). At 327–352 (YAMPVFDMMETLLVKKLNFRPTTTLR) the chain is on the cytoplasmic side. The chain crosses the membrane as a helical span at residues 353–375 (FFVRNFYVAATMFVGMTFPFFGG). At 376–378 (LLA) the chain is on the extracellular side. Residues 379–401 (FFGGFAFAPTTYFLPCVIWLAIY) form a helical membrane-spanning segment. Residues 402–409 (KPKKYSLS) lie on the Cytoplasmic side of the membrane. Residues 410–430 (WWANWVCIVFGLFLMVLSPIG) traverse the membrane as a helical segment. The Extracellular portion of the chain corresponds to 431–446 (GLRTIVIQAKGYKFYS).

It belongs to the amino acid/polyamine transporter 2 family. Amino acid/auxin permease (AAAP) (TC 2.A.18.2) subfamily. Expressed in roots, stems, flowers, leaves, siliques and pollen. Found in the tips of roots and in the rhizodermis of emerging roots and in lateral roots. Higher expression in older leaves as compared to joung leaves. Detected first at the hydathodes, then in the epidermis and finally in matures leaves in all mesophyll cells. Not detected in vascular bundles or in seeds.

The protein resides in the cell membrane. With respect to regulation, inhibited by carbonlycyanide m-chlorophenylhydrazone (CCCP) and DEPC. In terms of biological role, amino acid-proton symporter. Transporter with a broad specificity for histidine, lysine, glutamic acid, alanine, serine, proline and glycine. Involved in both apoplastic transport of amino acids in leaves and their uptake by roots. The protein is Lysine histidine transporter 1 (LHT1) of Arabidopsis thaliana (Mouse-ear cress).